A 598-amino-acid chain; its full sequence is Elongation factor 4 (598 aa).

One can recognise a tr-type G domain in the interval 2–184 (QHIRNFSIIA…TVVRRVPPPK (183 aa)). GTP is bound by residues 14-19 (DHGKST) and 131-134 (NKID).

The protein belongs to the TRAFAC class translation factor GTPase superfamily. Classic translation factor GTPase family. LepA subfamily.

Its subcellular location is the cell inner membrane. It catalyses the reaction GTP + H2O = GDP + phosphate + H(+). Functionally, required for accurate and efficient protein synthesis under certain stress conditions. May act as a fidelity factor of the translation reaction, by catalyzing a one-codon backward translocation of tRNAs on improperly translocated ribosomes. Back-translocation proceeds from a post-translocation (POST) complex to a pre-translocation (PRE) complex, thus giving elongation factor G a second chance to translocate the tRNAs correctly. Binds to ribosomes in a GTP-dependent manner. The chain is Elongation factor 4 from Aromatoleum aromaticum (strain DSM 19018 / LMG 30748 / EbN1) (Azoarcus sp. (strain EbN1)).